The chain runs to 329 residues: Prostaglandin reductase 1 (329 aa).

The residue at position 18 (Thr-18) is a Phosphothreonine. Position 20 is a phosphoserine (Ser-20). Residues 152-155 (GAVG), Lys-178, Tyr-193, Asn-217, 239-245 (CGAISTY), 270-272 (FVV), and Asn-321 each bind NADP(+). Lys-178 carries the post-translational modification N6-(2-hydroxyisobutyryl)lysine; alternate. The residue at position 178 (Lys-178) is an N6-acetyllysine; alternate.

Belongs to the NADP-dependent oxidoreductase L4BD family. As to quaternary structure, monomer or homodimer. In terms of tissue distribution, high expression in the kidney, liver, and intestine but not in leukocytes.

It localises to the cytoplasm. The catalysed reaction is 13,14-dihydro-15-oxo-prostaglandin E1 + NADP(+) = 15-oxoprostaglandin E1 + NADPH + H(+). It carries out the reaction 13,14-dihydro-15-oxo-prostaglandin E2 + NADP(+) = 15-oxoprostaglandin E2 + NADPH + H(+). The enzyme catalyses 13,14-dihydro-15-oxo-prostaglandin F1alpha + NADP(+) = 15-oxoprostaglandin F1alpha + NADPH + H(+). It catalyses the reaction 13,14-dihydro-15-oxo-PGF2alpha + NADP(+) = 15-oxoprostaglandin F2alpha + NADPH + H(+). The catalysed reaction is leukotriene B4 + NADP(+) = 12-oxo-leukotriene B4 + NADPH + H(+). It carries out the reaction 20-hydroxy-leukotriene B4 + NADP(+) = 12-oxo-20-hydroxy-leukotriene B4 + NADPH + H(+). The enzyme catalyses 6-trans-leukotriene B4 + NADP(+) = 12-oxo-(5S)-hydroxy-(6E,8E,10E,14Z)-eicosatetraenoate + NADPH + H(+). It catalyses the reaction (5S,12S)-dihydroxy-(6E,10E,12E,14Z)-eicosatetraenoate + NADP(+) = 12-oxo-(5S)-hydroxy-(6E,8E,10E,14Z)-eicosatetraenoate + NADPH + H(+). The catalysed reaction is an n-alkanal + NADP(+) = an alk-2-enal + NADPH + H(+). It carries out the reaction hexanal + NADP(+) = (E)-hex-2-enal + NADPH + H(+). The enzyme catalyses octanal + NADP(+) = (2E)-octenal + NADPH + H(+). It catalyses the reaction decanal + NADP(+) = (2E)-decenal + NADPH + H(+). The catalysed reaction is dodecanal + NADP(+) = (2E)-dodecenal + NADPH + H(+). It carries out the reaction 4-hydroxynonanal + NADP(+) = (E)-4-hydroxynon-2-enal + NADPH + H(+). The enzyme catalyses pentan-2-one + NADP(+) = (E)-pent-3-en-2-one + NADPH + H(+). It catalyses the reaction nonan-2-one + NADP(+) = (3E)-nonen-2-one + NADPH + H(+). Functionally, NAD(P)H-dependent oxidoreductase involved in metabolic inactivation of pro- and anti-inflammatory eicosanoids: prostaglandins (PG), leukotrienes (LT) and lipoxins (LX). Catalyzes with high efficiency the reduction of the 13,14 double bond of 15-oxoPGs, including 15-oxo-PGE1, 15-oxo-PGE2, 15-oxo-PGF1-alpha and 15-oxo-PGF2-alpha. Catalyzes with lower efficiency the oxidation of the hydroxyl group at C12 of LTB4 and its derivatives, converting them into biologically less active 12-oxo-LTB4 metabolites. Reduces 15-oxo-LXA4 to 13,14 dihydro-15-oxo-LXA4, enhancing neutrophil recruitment at the inflammatory site. May play a role in metabolic detoxification of alkenals and ketones. Reduces alpha,beta-unsaturated alkenals and ketones, particularly those with medium-chain length, showing highest affinity toward (2E)-decenal and (3E)-3-nonen-2-one. May inactivate 4-hydroxy-2-nonenal, a cytotoxic lipid constituent of oxidized low-density lipoprotein particles. The chain is Prostaglandin reductase 1 (PTGR1) from Homo sapiens (Human).